The primary structure comprises 333 residues: 4-hydroxythreonine-4-phosphate dehydrogenase (333 aa).

Substrate contacts are provided by His133 and Thr134. The a divalent metal cation site is built by His169, His214, and His269. Residues Lys277, Asn286, and Arg295 each contribute to the substrate site.

The protein belongs to the PdxA family. In terms of assembly, homodimer. Zn(2+) serves as cofactor. Mg(2+) is required as a cofactor. The cofactor is Co(2+).

It is found in the cytoplasm. It catalyses the reaction 4-(phosphooxy)-L-threonine + NAD(+) = 3-amino-2-oxopropyl phosphate + CO2 + NADH. It participates in cofactor biosynthesis; pyridoxine 5'-phosphate biosynthesis; pyridoxine 5'-phosphate from D-erythrose 4-phosphate: step 4/5. Catalyzes the NAD(P)-dependent oxidation of 4-(phosphooxy)-L-threonine (HTP) into 2-amino-3-oxo-4-(phosphooxy)butyric acid which spontaneously decarboxylates to form 3-amino-2-oxopropyl phosphate (AHAP). This Caulobacter vibrioides (strain ATCC 19089 / CIP 103742 / CB 15) (Caulobacter crescentus) protein is 4-hydroxythreonine-4-phosphate dehydrogenase.